We begin with the raw amino-acid sequence, 282 residues long: NAD kinase (282 aa).

The Proton acceptor role is filled by Asp-67. NAD(+) is bound by residues Asp-67–Gly-68, Asn-140–Glu-141, His-151, Arg-170, Asp-172, and Thr-183–Ser-188.

The protein belongs to the NAD kinase family. Requires a divalent metal cation as cofactor.

It localises to the cytoplasm. It carries out the reaction NAD(+) + ATP = ADP + NADP(+) + H(+). Functionally, involved in the regulation of the intracellular balance of NAD and NADP, and is a key enzyme in the biosynthesis of NADP. Catalyzes specifically the phosphorylation on 2'-hydroxyl of the adenosine moiety of NAD to yield NADP. The polypeptide is NAD kinase (Halobacterium salinarum (strain ATCC 700922 / JCM 11081 / NRC-1) (Halobacterium halobium)).